Consider the following 444-residue polypeptide: Platelet-activating factor acetylhydrolase (444 aa).

The signal sequence occupies residues Met1–Pro21. 2 N-linked (GlcNAc...) asparagine glycosylation sites follow: Asn60 and Asn200. Ser274 functions as the Nucleophile in the catalytic mechanism. Residues Asp297 and His352 each act as charge relay system in the active site. An N-linked (GlcNAc...) asparagine glycan is attached at Asn424.

Belongs to the AB hydrolase superfamily. Lipase family. In terms of processing, N-glycosylated. In terms of tissue distribution, plasma.

The protein resides in the secreted. It is found in the extracellular space. It catalyses the reaction a 1-O-alkyl-2-acetyl-sn-glycero-3-phosphocholine + H2O = a 1-O-alkyl-sn-glycero-3-phosphocholine + acetate + H(+). The enzyme catalyses 1-O-decyl-2-acetyl-sn-glycero-3-phosphocholine + H2O = 1-O-decyl-sn-glycero-3-phosphocholine + acetate + H(+). The catalysed reaction is 1-O-dodecyl-2-acetyl-sn-glycero-3-phosphocholine + H2O = 1-O-dodecyl-sn-glycero-3-phosphocholine + acetate + H(+). It carries out the reaction 1-O-tetradecyl-2-acetyl-sn-glycero-3-phosphocholine + H2O = 1-O-tetradecyl-sn-glycero-3-phosphocholine + acetate + H(+). It catalyses the reaction 1-O-hexadecyl-2-acetyl-sn-glycero-3-phosphocholine + H2O = 1-O-hexadecyl-sn-glycero-3-phosphocholine + acetate + H(+). The enzyme catalyses 1-O-octadecyl-2-acetyl-sn-glycero-3-phosphocholine + H2O = 1-O-octadecyl-sn-glycero-3-phosphocholine + acetate + H(+). The catalysed reaction is 1-hexadecanoyl-2-acetyl-sn-glycero-3-phosphocholine + H2O = 1-hexadecanoyl-sn-glycero-3-phosphocholine + acetate + H(+). It carries out the reaction 1-hexadecanoyl-2-propionyl-sn-glycero-3-phosphocholine + H2O = propanoate + 1-hexadecanoyl-sn-glycero-3-phosphocholine + H(+). It catalyses the reaction 1-hexadecanoyl-2-butanoyl-sn-glycero-3-phosphocholine + H2O = butanoate + 1-hexadecanoyl-sn-glycero-3-phosphocholine + H(+). The enzyme catalyses 1-hexadecanoyl-2-pentanoyl-sn-glycero-3-phosphocholine + H2O = pentanoate + 1-hexadecanoyl-sn-glycero-3-phosphocholine + H(+). The catalysed reaction is 1-hexadecanoyl-2-glutaroyl-sn-glycero-3-phosphocholine + H2O = glutarate + 1-hexadecanoyl-sn-glycero-3-phosphocholine + H(+). It carries out the reaction 1-hexadecanoyl-2-(5-oxopentanoyl)-sn-glycero-3-phosphocholine + H2O = 5-oxopentanoate + 1-hexadecanoyl-sn-glycero-3-phosphocholine + H(+). It catalyses the reaction 1-hexadecanoyl-2-(9-oxononanoyl)-sn-glycero-3-phosphocholine + H2O = 9-oxononanoate + 1-hexadecanoyl-sn-glycero-3-phosphocholine + H(+). The enzyme catalyses 1-hexadecanoyl-2-[9-hydroperoxy-(10E-octadecenoyl)]-sn-glycero-3-phosphocholine + H2O = 9-hydroperoxy-10E-octadecenoate + 1-hexadecanoyl-sn-glycero-3-phosphocholine + H(+). The catalysed reaction is 1-hexadecanoyl-2-(10-hydroperoxy-8E-octadecenoyl)-sn-glycero-3-phosphocholine + H2O = 10-hydroperoxy-(8E)-octadecenoate + 1-hexadecanoyl-sn-glycero-3-phosphocholine + H(+). Functionally, lipoprotein-associated calcium-independent phospholipase A2 involved in phospholipid catabolism during inflammatory and oxidative stress response. At the lipid-aqueous interface, hydrolyzes the ester bond of fatty acyl group attached at sn-2 position of phospholipids (phospholipase A2 activity). Specifically targets phospholipids with a short-chain fatty acyl group at sn-2 position. Can hydrolyze phospholipids with long fatty acyl chains, only if they carry oxidized functional groups. Hydrolyzes and inactivates platelet-activating factor (PAF, 1-O-alkyl-2-acetyl-sn-glycero-3-phosphocholine), a potent pro-inflammatory signaling lipid that acts through PTAFR on various innate immune cells. Hydrolyzes oxidatively truncated phospholipids carrying an aldehyde group at omega position, preventing their accumulation in low-density lipoprotein (LDL) particles and uncontrolled pro-inflammatory effects. As part of high-density lipoprotein (HDL) particles, can hydrolyze phospholipids having long-chain fatty acyl hydroperoxides at sn-2 position and protect against potential accumulation of these oxylipins in the vascular wall. Catalyzes the release from membrane phospholipids of F2-isoprostanes, lipid biomarkers of cellular oxidative damage. The sequence is that of Platelet-activating factor acetylhydrolase (PLA2G7) from Canis lupus familiaris (Dog).